Here is a 71-residue protein sequence, read N- to C-terminus: Protein SlyX homolog (71 aa).

The protein belongs to the SlyX family.

The chain is Protein SlyX homolog from Azotobacter vinelandii (strain DJ / ATCC BAA-1303).